We begin with the raw amino-acid sequence, 109 residues long: Small ribosomal subunit protein uS17 (109 aa).

This sequence belongs to the universal ribosomal protein uS17 family. As to quaternary structure, part of the 30S ribosomal subunit.

In terms of biological role, one of the primary rRNA binding proteins, it binds specifically to the 5'-end of 16S ribosomal RNA. This chain is Small ribosomal subunit protein uS17, found in Methanococcus vannielii.